A 426-amino-acid chain; its full sequence is Growth-regulating factor 9 (426 aa).

The region spanning 92-127 (PFTPSQWMELEHQALIYKYLNAKAPIPSSLLISISK) is the QLQ domain. Residues 151-195 (DPEPGRCRRTDGKKWRCSKEAMADHKYCERHINRNRHRSRKPVEN) enclose the WRC domain. 2 short sequence motifs (bipartite nuclear localization signal) span residues 156-166 (RCRRTDGKKWR) and 184-191 (RNRHRSRK). The tract at residues 184-222 (RNRHRSRKPVENQSRKTVKETPCAGSLPSSVGQGSFKKA) is disordered. Positions 191–202 (KPVENQSRKTVK) are enriched in basic and acidic residues.

The protein belongs to the GRF family.

It localises to the nucleus. Its function is as follows. Transcription activator that plays a regulatory role in gibberellin-induced stem elongation. This Oryza sativa subsp. japonica (Rice) protein is Growth-regulating factor 9 (GRF9).